A 274-amino-acid chain; its full sequence is Large ribosomal subunit protein uL2 (274 aa).

The tract at residues 224 to 274 (VAMNPVDHPHGGGEGRTSGGRHPVTPWGIPTKGYKTRRNKRSNKLIVQKRK) is disordered. A compositionally biased stretch (basic residues) spans 257–274 (YKTRRNKRSNKLIVQKRK).

Belongs to the universal ribosomal protein uL2 family. Part of the 50S ribosomal subunit. Forms a bridge to the 30S subunit in the 70S ribosome.

In terms of biological role, one of the primary rRNA binding proteins. Required for association of the 30S and 50S subunits to form the 70S ribosome, for tRNA binding and peptide bond formation. It has been suggested to have peptidyltransferase activity; this is somewhat controversial. Makes several contacts with the 16S rRNA in the 70S ribosome. This is Large ribosomal subunit protein uL2 from Francisella tularensis subsp. tularensis (strain FSC 198).